The chain runs to 175 residues: Small ribosomal subunit protein bS16 (175 aa).

Belongs to the bacterial ribosomal protein bS16 family.

This chain is Small ribosomal subunit protein bS16, found in Cytophaga hutchinsonii (strain ATCC 33406 / DSM 1761 / CIP 103989 / NBRC 15051 / NCIMB 9469 / D465).